The sequence spans 273 residues: Dermonecrotic toxin LdSicTox-alphaIB3ai (273 aa).

The active site involves His5. Mg(2+)-binding residues include Glu25 and Asp27. The Nucleophile role is filled by His41. Disulfide bonds link Cys45–Cys51 and Cys47–Cys190. Asp85 is a binding site for Mg(2+).

Belongs to the arthropod phospholipase D family. Class II subfamily. Mg(2+) is required as a cofactor. As to expression, expressed by the venom gland.

It localises to the secreted. It catalyses the reaction an N-(acyl)-sphingosylphosphocholine = an N-(acyl)-sphingosyl-1,3-cyclic phosphate + choline. It carries out the reaction an N-(acyl)-sphingosylphosphoethanolamine = an N-(acyl)-sphingosyl-1,3-cyclic phosphate + ethanolamine. The enzyme catalyses a 1-acyl-sn-glycero-3-phosphocholine = a 1-acyl-sn-glycero-2,3-cyclic phosphate + choline. The catalysed reaction is a 1-acyl-sn-glycero-3-phosphoethanolamine = a 1-acyl-sn-glycero-2,3-cyclic phosphate + ethanolamine. Its function is as follows. Dermonecrotic toxins cleave the phosphodiester linkage between the phosphate and headgroup of certain phospholipids (sphingolipid and lysolipid substrates), forming an alcohol (often choline) and a cyclic phosphate. This toxin acts on sphingomyelin (SM). It may also act on ceramide phosphoethanolamine (CPE), lysophosphatidylcholine (LPC) and lysophosphatidylethanolamine (LPE), but not on lysophosphatidylserine (LPS), and lysophosphatidylglycerol (LPG). It acts by transphosphatidylation, releasing exclusively cyclic phosphate products as second products. Induces dermonecrosis, hemolysis, increased vascular permeability, edema, inflammatory response, and platelet aggregation. In Loxosceles deserta (Desert recluse spider), this protein is Dermonecrotic toxin LdSicTox-alphaIB3ai.